The following is a 199-amino-acid chain: NAD(P)H dehydrogenase (quinone) (199 aa).

One can recognise a Flavodoxin-like domain in the interval V4–V190. Residues S10 to I15 and T78 to F80 each bind FMN. NAD(+) is bound at residue Y12. A substrate-binding site is contributed by W98. FMN-binding positions include S113–G119 and H134.

It belongs to the WrbA family. It depends on FMN as a cofactor.

It carries out the reaction a quinone + NADH + H(+) = a quinol + NAD(+). The catalysed reaction is a quinone + NADPH + H(+) = a quinol + NADP(+). The chain is NAD(P)H dehydrogenase (quinone) from Azoarcus sp. (strain BH72).